Here is a 102-residue protein sequence, read N- to C-terminus: Legumin-like protein Mac i 2 (102 aa).

This sequence belongs to the 11S seed storage protein (globulins) family.

Its function is as follows. Seed storage protein. This is Legumin-like protein Mac i 2 from Macadamia integrifolia (Macadamia nut).